The sequence spans 252 residues: Protein BTG3 (252 aa).

The segment at 138 to 162 (VTSDYHSGSSSSDEDTSKEVEVKPS) is disordered.

This sequence belongs to the BTG family. Highly expressed in the brain.

In terms of biological role, overexpression impairs serum-induced cell cycle progression from the G0/G1 to S phase. This is Protein BTG3 from Rattus norvegicus (Rat).